The chain runs to 123 residues: PTS system glucitol/sorbitol-specific EIIA component (123 aa).

The 114-residue stretch at 3-116 (VIYQTTITRI…PDDIAPGSVL (114 aa)) folds into the PTS EIIA type-5 domain. The active-site Tele-phosphohistidine intermediate is histidine 43. Residue histidine 43 is modified to Phosphohistidine; by HPr.

The protein resides in the cytoplasm. Its function is as follows. The phosphoenolpyruvate-dependent sugar phosphotransferase system (sugar PTS), a major carbohydrate active transport system, catalyzes the phosphorylation of incoming sugar substrates concomitantly with their translocation across the cell membrane. The enzyme II complex composed of SrlA, SrlB and SrlE is involved in glucitol/sorbitol transport. It can also use D-mannitol. This is PTS system glucitol/sorbitol-specific EIIA component (srlB) from Escherichia coli (strain K12).